Reading from the N-terminus, the 95-residue chain is Aspartyl/glutamyl-tRNA(Asn/Gln) amidotransferase subunit C (95 aa).

The protein belongs to the GatC family. Heterotrimer of A, B and C subunits.

It catalyses the reaction L-glutamyl-tRNA(Gln) + L-glutamine + ATP + H2O = L-glutaminyl-tRNA(Gln) + L-glutamate + ADP + phosphate + H(+). The enzyme catalyses L-aspartyl-tRNA(Asn) + L-glutamine + ATP + H2O = L-asparaginyl-tRNA(Asn) + L-glutamate + ADP + phosphate + 2 H(+). Functionally, allows the formation of correctly charged Asn-tRNA(Asn) or Gln-tRNA(Gln) through the transamidation of misacylated Asp-tRNA(Asn) or Glu-tRNA(Gln) in organisms which lack either or both of asparaginyl-tRNA or glutaminyl-tRNA synthetases. The reaction takes place in the presence of glutamine and ATP through an activated phospho-Asp-tRNA(Asn) or phospho-Glu-tRNA(Gln). This Syntrophus aciditrophicus (strain SB) protein is Aspartyl/glutamyl-tRNA(Asn/Gln) amidotransferase subunit C.